Here is a 487-residue protein sequence, read N- to C-terminus: Argininosuccinate lyase (487 aa).

This sequence belongs to the lyase 1 family. Argininosuccinate lyase subfamily.

It is found in the cytoplasm. The enzyme catalyses 2-(N(omega)-L-arginino)succinate = fumarate + L-arginine. Its pathway is amino-acid biosynthesis; L-arginine biosynthesis; L-arginine from L-ornithine and carbamoyl phosphate: step 3/3. The chain is Argininosuccinate lyase from Natranaerobius thermophilus (strain ATCC BAA-1301 / DSM 18059 / JW/NM-WN-LF).